A 262-amino-acid chain; its full sequence is Small ribosomal subunit protein uS2 (262 aa).

The disordered stretch occupies residues 236–262 (AGGAAEAPAAEDVQTEEAAAPEADSAE).

The protein belongs to the universal ribosomal protein uS2 family.

This is Small ribosomal subunit protein uS2 from Psychrobacter sp. (strain PRwf-1).